The chain runs to 69 residues: Large ribosomal subunit protein bL28 (69 aa).

The protein belongs to the bacterial ribosomal protein bL28 family.

The sequence is that of Large ribosomal subunit protein bL28 from Oleidesulfovibrio alaskensis (strain ATCC BAA-1058 / DSM 17464 / G20) (Desulfovibrio alaskensis).